The sequence spans 353 residues: Photosystem II protein D1 (353 aa).

An N-acetylthreonine modification is found at threonine 2. Position 2 is a phosphothreonine (threonine 2). The next 3 membrane-spanning stretches (helical) occupy residues 29–46 (YIGW…TATS), 118–133 (HFLL…EWEL), and 142–156 (WIAV…AATA). A chlorophyll a-binding site is contributed by histidine 118. Tyrosine 126 provides a ligand contact to pheophytin a. [CaMn4O5] cluster is bound by residues aspartate 170 and glutamate 189. Residues 197 to 218 (FHMLGVAGVFGGSLFSAMHGSL) traverse the membrane as a helical segment. Chlorophyll a is bound at residue histidine 198. Residues histidine 215 and 264–265 (SF) each bind a quinone. A Fe cation-binding site is contributed by histidine 215. Fe cation is bound at residue histidine 272. The chain crosses the membrane as a helical span at residues 274–288 (FLAAWPVIGIWFTAL). Residues histidine 332, glutamate 333, aspartate 342, and alanine 344 each coordinate [CaMn4O5] cluster. The propeptide occupies 345–353 (AVEAPSTNG).

This sequence belongs to the reaction center PufL/M/PsbA/D family. As to quaternary structure, PSII is composed of 1 copy each of membrane proteins PsbA, PsbB, PsbC, PsbD, PsbE, PsbF, PsbH, PsbI, PsbJ, PsbK, PsbL, PsbM, PsbT, PsbX, PsbY, PsbZ, Psb30/Ycf12, at least 3 peripheral proteins of the oxygen-evolving complex and a large number of cofactors. It forms dimeric complexes. The D1/D2 heterodimer binds P680, chlorophylls that are the primary electron donor of PSII, and subsequent electron acceptors. It shares a non-heme iron and each subunit binds pheophytin, quinone, additional chlorophylls, carotenoids and lipids. D1 provides most of the ligands for the Mn4-Ca-O5 cluster of the oxygen-evolving complex (OEC). There is also a Cl(-1) ion associated with D1 and D2, which is required for oxygen evolution. The PSII complex binds additional chlorophylls, carotenoids and specific lipids. is required as a cofactor. Post-translationally, tyr-161 forms a radical intermediate that is referred to as redox-active TyrZ, YZ or Y-Z. C-terminally processed by CTPA; processing is essential to allow assembly of the oxygen-evolving complex and thus photosynthetic growth.

It is found in the plastid. The protein localises to the chloroplast thylakoid membrane. It catalyses the reaction 2 a plastoquinone + 4 hnu + 2 H2O = 2 a plastoquinol + O2. Its function is as follows. Photosystem II (PSII) is a light-driven water:plastoquinone oxidoreductase that uses light energy to abstract electrons from H(2)O, generating O(2) and a proton gradient subsequently used for ATP formation. It consists of a core antenna complex that captures photons, and an electron transfer chain that converts photonic excitation into a charge separation. The D1/D2 (PsbA/PsbD) reaction center heterodimer binds P680, the primary electron donor of PSII as well as several subsequent electron acceptors. This Buxus microphylla (Littleleaf boxwood) protein is Photosystem II protein D1.